The sequence spans 110 residues: Secreted RxLR effector protein 89 (110 aa).

A signal peptide spans 1–22 (MTSVVIVVSVAVLLGVLVITDS). N-linked (GlcNAc...) asparagine glycosylation is present at Asn-29. Residues 61–74 (RHLRTILQWWQERR) carry the RxLR-dEER motif.

It belongs to the RxLR effector family.

The protein resides in the secreted. It localises to the host nucleus. The protein localises to the host cytoplasm. In terms of biological role, secreted effector that completely suppresses the host cell death induced by cell death-inducing proteins. This is Secreted RxLR effector protein 89 from Plasmopara viticola (Downy mildew of grapevine).